Reading from the N-terminus, the 327-residue chain is Gonadotropin-releasing hormone receptor (327 aa).

Over 1 to 37 (MASASPEQNQNHCSAVNNSNMLMQGNLPTLTLSGKIR) the chain is Extracellular. Residue asparagine 17 is glycosylated (N-linked (GlcNAc...) asparagine). The helical transmembrane segment at 38–57 (VTVTFFLFLLSTIFNASFLL) threads the bilayer. Residues 58–76 (KLQKWTQKKEKGKKLSRMK) lie on the Cytoplasmic side of the membrane. The helical transmembrane segment at 77 to 96 (VLLKHLTLANLLETLIVMPL) threads the bilayer. The Extracellular segment spans residues 97-114 (DGMWNITVQWYAGEFLCK). Asparagine 101 is a glycosylation site (N-linked (GlcNAc...) asparagine). A disulfide bridge links cysteine 113 with cysteine 195. A helical transmembrane segment spans residues 115–136 (VLSYLKLFSMYAPAFMMVVISL). Residues 137-163 (DRSLAITRPLAMKNNGKLGQSMIGLAW) lie on the Cytoplasmic side of the membrane. A helical transmembrane segment spans residues 164-183 (LLSGIFAGPQLYIFRMIHLA). Over 184–211 (DSSGQTEGFPQCVTHCSFPQWWHQAFYN) the chain is Extracellular. Residues 212–231 (FFTFSCLFIIPLFITLICNA) form a helical membrane-spanning segment. The Cytoplasmic segment spans residues 232–280 (KIIFTLTRVLHQDPHELQLNQSKNNIPRARLRTLKMTVAFATSFTVCWT). The chain crosses the membrane as a helical span at residues 281 to 299 (PYYVLGIWYWFDPEMLNRV). Topologically, residues 300–305 (SDPVNH) are extracellular. Residues 306–325 (FFFLFALLNPCFDPLIYGYF) traverse the membrane as a helical segment. The Cytoplasmic segment spans residues 326–327 (SL).

Belongs to the G-protein coupled receptor 1 family.

It is found in the cell membrane. Functionally, receptor for gonadotropin releasing hormone (GnRH) that mediates the action of GnRH to stimulate the secretion of the gonadotropic hormones luteinizing hormone (LH) and follicle-stimulating hormone (FSH). This receptor mediates its action by association with G-proteins that activate a phosphatidylinositol-calcium second messenger system. The protein is Gonadotropin-releasing hormone receptor (GNRHR) of Canis lupus familiaris (Dog).